We begin with the raw amino-acid sequence, 353 residues long: Photosystem II D2 protein (353 aa).

Threonine 2 carries the N-acetylthreonine modification. Threonine 2 carries the post-translational modification Phosphothreonine. Residues 41–61 (CAYFALGGWLTGTTFVTSWYT) traverse the membrane as a helical segment. Histidine 118 provides a ligand contact to chlorophyll a. Residues 125–141 (GFMLRQFEIARSVQLRP) form a helical membrane-spanning segment. Pheophytin a-binding residues include glutamine 130 and asparagine 143. The helical transmembrane segment at 153–166 (VFVSVFLIYPLGQS) threads the bilayer. Histidine 198 contacts chlorophyll a. The chain crosses the membrane as a helical span at residues 208–228 (AALLCAIHGATVENTIFEDGD). A plastoquinone-binding residues include histidine 215 and phenylalanine 262. Histidine 215 is a Fe cation binding site. Histidine 269 is a binding site for Fe cation. A helical membrane pass occupies residues 279 to 295 (GLWMSAVGVVGLAVNLR).

It belongs to the reaction center PufL/M/PsbA/D family. As to quaternary structure, PSII is composed of 1 copy each of membrane proteins PsbA, PsbB, PsbC, PsbD, PsbE, PsbF, PsbH, PsbI, PsbJ, PsbK, PsbL, PsbM, PsbT, PsbX, PsbY, PsbZ, Psb30/Ycf12, at least 3 peripheral proteins of the oxygen-evolving complex and a large number of cofactors. It forms dimeric complexes. The D1/D2 heterodimer binds P680, chlorophylls that are the primary electron donor of PSII, and subsequent electron acceptors. It shares a non-heme iron and each subunit binds pheophytin, quinone, additional chlorophylls, carotenoids and lipids. There is also a Cl(-1) ion associated with D1 and D2, which is required for oxygen evolution. The PSII complex binds additional chlorophylls, carotenoids and specific lipids. serves as cofactor.

Its subcellular location is the plastid. It localises to the chloroplast thylakoid membrane. It carries out the reaction 2 a plastoquinone + 4 hnu + 2 H2O = 2 a plastoquinol + O2. Its function is as follows. Photosystem II (PSII) is a light-driven water:plastoquinone oxidoreductase that uses light energy to abstract electrons from H(2)O, generating O(2) and a proton gradient subsequently used for ATP formation. It consists of a core antenna complex that captures photons, and an electron transfer chain that converts photonic excitation into a charge separation. The D1/D2 (PsbA/PsbD) reaction center heterodimer binds P680, the primary electron donor of PSII as well as several subsequent electron acceptors. D2 is needed for assembly of a stable PSII complex. The sequence is that of Photosystem II D2 protein from Chaetosphaeridium globosum (Charophycean green alga).